Here is a 176-residue protein sequence, read N- to C-terminus: ATP-dependent protease subunit HslV (176 aa).

The active site involves Thr4. Residues Gly158, Cys161, and Thr164 each coordinate Na(+).

Belongs to the peptidase T1B family. HslV subfamily. As to quaternary structure, a double ring-shaped homohexamer of HslV is capped on each side by a ring-shaped HslU homohexamer. The assembly of the HslU/HslV complex is dependent on binding of ATP.

It is found in the cytoplasm. It carries out the reaction ATP-dependent cleavage of peptide bonds with broad specificity.. Its activity is regulated as follows. Allosterically activated by HslU binding. Functionally, protease subunit of a proteasome-like degradation complex believed to be a general protein degrading machinery. The polypeptide is ATP-dependent protease subunit HslV (Rhizobium meliloti (strain 1021) (Ensifer meliloti)).